Consider the following 188-residue polypeptide: D-glycero-beta-D-manno-heptose-1,7-bisphosphate 7-phosphatase (188 aa).

Residue Asp11 is the Nucleophile of the active site. Residues Asp11 and Asp13 each coordinate Mg(2+). Residues Asp11–Asp13, Asp19–Tyr22, and Thr53–Ser56 each bind substrate. The active-site Proton donor is Asp13. Positions 92, 94, 107, and 109 each coordinate Zn(2+). Residue Arg110–Lys111 coordinates substrate. Residues Asp136 and Lys137 each contribute to the Mg(2+) site. Lys137 provides a ligand contact to substrate.

This sequence belongs to the GmhB family. As to quaternary structure, monomer. Mg(2+) is required as a cofactor. Requires Zn(2+) as cofactor.

It localises to the cytoplasm. The enzyme catalyses D-glycero-beta-D-manno-heptose 1,7-bisphosphate + H2O = D-glycero-beta-D-manno-heptose 1-phosphate + phosphate. The protein operates within nucleotide-sugar biosynthesis; ADP-L-glycero-beta-D-manno-heptose biosynthesis; ADP-L-glycero-beta-D-manno-heptose from D-glycero-beta-D-manno-heptose 7-phosphate: step 2/4. It participates in bacterial outer membrane biogenesis; LPS core biosynthesis. Its function is as follows. Converts the D-glycero-beta-D-manno-heptose 1,7-bisphosphate intermediate into D-glycero-beta-D-manno-heptose 1-phosphate by removing the phosphate group at the C-7 position. The chain is D-glycero-beta-D-manno-heptose-1,7-bisphosphate 7-phosphatase (gmhB) from Yersinia pestis.